Consider the following 182-residue polypeptide: UPF0398 protein lwe1908 (182 aa).

Belongs to the UPF0398 family.

The sequence is that of UPF0398 protein lwe1908 from Listeria welshimeri serovar 6b (strain ATCC 35897 / DSM 20650 / CCUG 15529 / CIP 8149 / NCTC 11857 / SLCC 5334 / V8).